A 427-amino-acid polypeptide reads, in one-letter code: Glutamate-1-semialdehyde 2,1-aminomutase (427 aa).

Lys-265 bears the N6-(pyridoxal phosphate)lysine mark.

Belongs to the class-III pyridoxal-phosphate-dependent aminotransferase family. HemL subfamily. As to quaternary structure, homodimer. The cofactor is pyridoxal 5'-phosphate.

The protein resides in the cytoplasm. It carries out the reaction (S)-4-amino-5-oxopentanoate = 5-aminolevulinate. Its pathway is porphyrin-containing compound metabolism; protoporphyrin-IX biosynthesis; 5-aminolevulinate from L-glutamyl-tRNA(Glu): step 2/2. This chain is Glutamate-1-semialdehyde 2,1-aminomutase, found in Pseudomonas paraeruginosa (strain DSM 24068 / PA7) (Pseudomonas aeruginosa (strain PA7)).